The chain runs to 148 residues: Large ribosomal subunit protein uL15 (148 aa).

The tract at residues 14-54 (HRKKRVGCGEGGGHGKTSGRGGKGQTARSGSSIRPGFEGGQ) is disordered. Residues 21-37 (CGEGGGHGKTSGRGGKG) show a composition bias toward gly residues.

This sequence belongs to the universal ribosomal protein uL15 family. As to quaternary structure, part of the 50S ribosomal subunit.

In terms of biological role, binds to the 23S rRNA. The polypeptide is Large ribosomal subunit protein uL15 (Opitutus terrae (strain DSM 11246 / JCM 15787 / PB90-1)).